A 248-amino-acid chain; its full sequence is Proteasome subunit alpha type-1 (248 aa).

It belongs to the peptidase T1A family. The 26S proteasome consists of a 20S proteasome core and two 19S regulatory subunits. The 20S proteasome core is composed of 28 subunits that are arranged in four stacked rings, resulting in a barrel-shaped structure. The two end rings are each formed by seven alpha subunits, and the two central rings are each formed by seven beta subunits. The catalytic chamber with the active sites is on the inside of the barrel.

It is found in the cytoplasm. The protein resides in the nucleus. Its function is as follows. The proteasome is a multicatalytic proteinase complex which is characterized by its ability to cleave peptides with Arg, Phe, Tyr, Leu, and Glu adjacent to the leaving group at neutral or slightly basic pH. The proteasome has an ATP-dependent proteolytic activity. The chain is Proteasome subunit alpha type-1 (psmA1) from Dictyostelium discoideum (Social amoeba).